We begin with the raw amino-acid sequence, 1059 residues long: DNA-directed RNA polymerase subunit beta (1059 aa).

This sequence belongs to the RNA polymerase beta chain family. As to quaternary structure, in plastids the minimal PEP RNA polymerase catalytic core is composed of four subunits: alpha, beta, beta', and beta''. When a (nuclear-encoded) sigma factor is associated with the core the holoenzyme is formed, which can initiate transcription (Potential).

It is found in the plastid. Its subcellular location is the apicoplast. It catalyses the reaction RNA(n) + a ribonucleoside 5'-triphosphate = RNA(n+1) + diphosphate. Functionally, DNA-dependent RNA polymerase catalyzes the transcription of DNA into RNA using the four ribonucleoside triphosphates as substrates. This is DNA-directed RNA polymerase subunit beta (rpoB) from Eimeria tenella (Coccidian parasite).